Consider the following 286-residue polypeptide: Foldase protein PrsA 1 (286 aa).

An N-terminal signal peptide occupies residues 1-18 (MKKAMLALAATSVIALSA). Residue cysteine 19 is the site of N-palmitoyl cysteine attachment. Cysteine 19 carries the S-diacylglycerol cysteine lipid modification. The PpiC domain occupies 130 to 220 (KPEIKASHIL…FGYHIIKVTD (91 aa)).

Belongs to the PrsA family.

It localises to the cell membrane. It carries out the reaction [protein]-peptidylproline (omega=180) = [protein]-peptidylproline (omega=0). Its function is as follows. Plays a major role in protein secretion by helping the post-translocational extracellular folding of several secreted proteins. This chain is Foldase protein PrsA 1 (prsA1), found in Bacillus cereus (strain ATCC 14579 / DSM 31 / CCUG 7414 / JCM 2152 / NBRC 15305 / NCIMB 9373 / NCTC 2599 / NRRL B-3711).